A 279-amino-acid chain; its full sequence is uncharacterized protein (279 aa).

This is an uncharacterized protein from Borreliella burgdorferi (strain ATCC 35210 / DSM 4680 / CIP 102532 / B31) (Borrelia burgdorferi).